Consider the following 287-residue polypeptide: ATP synthase gamma chain (287 aa).

This sequence belongs to the ATPase gamma chain family. F-type ATPases have 2 components, CF(1) - the catalytic core - and CF(0) - the membrane proton channel. CF(1) has five subunits: alpha(3), beta(3), gamma(1), delta(1), epsilon(1). CF(0) has three main subunits: a, b and c.

The protein resides in the cell inner membrane. Its function is as follows. Produces ATP from ADP in the presence of a proton gradient across the membrane. The gamma chain is believed to be important in regulating ATPase activity and the flow of protons through the CF(0) complex. This is ATP synthase gamma chain from Escherichia fergusonii (strain ATCC 35469 / DSM 13698 / CCUG 18766 / IAM 14443 / JCM 21226 / LMG 7866 / NBRC 102419 / NCTC 12128 / CDC 0568-73).